We begin with the raw amino-acid sequence, 89 residues long: OMEGA-ectatommitoxin(02)-Rm1a (89 aa).

A signal peptide spans 1–30; it reads MKDSYISIVIAYLMVTFILVSSMPIEGEKG. 3 disulfide bridges follow: Cys-39/Cys-52, Cys-47/Cys-68, and Cys-70/Cys-79. An EGF-like domain is found at 43 to 80; that stretch reads YANYCFNGKCVHVVAQDEPGKPCYSCICDKFYIGKRCG.

The protein belongs to the EGF domain peptide family. In terms of tissue distribution, expressed by the venom gland.

It is found in the secreted. In terms of biological role, ant peptide with probable defensive activity which acts as a potent agonist of the mammalian epidermal growth factor receptor (EGFR). Mimics, both structurally and functionally, vertebrate epidermal growth factor (EGF) peptide hormones. In vivo, intraplantar injection in mice causes long-lasting (several days) hypersensitivity of the injected paw to both mechanical and thermal stimuli. Its long-lasting effect is unusual for venom toxins whose effects are usually immediate. One possible explanation is that it would reduce the duration of a nest attack, discourage future attacks, or enhance the actions of subsequent exposure to other pain-inducing venom peptides. The sequence is that of OMEGA-ectatommitoxin(02)-Rm1a from Rhytidoponera metallica (Australian green-headed ant).